A 622-amino-acid polypeptide reads, in one-letter code: Kelch-like protein 14 (622 aa).

The region spanning 33 to 145 is the BTB domain; it reads CDVTLTAQGQ…LYTANVTLSL (113 aa). The disordered stretch occupies residues 73 to 108; it reads ALGPGAQDGLGGAPPKEPPPPPQEEPGTPSSSPEDK. Over residues 87–96 the composition is skewed to pro residues; sequence PKEPPPPPQE. Kelch repeat units lie at residues 317 to 366, 367 to 418, 419 to 465, 467 to 512, 514 to 564, and 566 to 614; these read MLLL…EVEN, FLFV…RLDK, NLYV…VHNG, IYIS…VMND, LYAI…VLDD, and IYLV…TVIL.

The protein resides in the cytoplasm. It localises to the cytosol. The protein localises to the endoplasmic reticulum membrane. The protein is Kelch-like protein 14 (KLHL14) of Gallus gallus (Chicken).